A 66-amino-acid polypeptide reads, in one-letter code: MAVPKRKMSRSNTRARRSQWKATAATLTTCENCKAPRQSHQACPQCGQYAGRTYAEAIRTDAVETR.

A compositionally biased stretch (basic residues) spans 1–19; it reads MAVPKRKMSRSNTRARRSQ. A disordered region spans residues 1–20; the sequence is MAVPKRKMSRSNTRARRSQW.

The protein belongs to the bacterial ribosomal protein bL32 family.

In Beutenbergia cavernae (strain ATCC BAA-8 / DSM 12333 / CCUG 43141 / JCM 11478 / NBRC 16432 / NCIMB 13614 / HKI 0122), this protein is Large ribosomal subunit protein bL32.